Reading from the N-terminus, the 116-residue chain is Ribosome-binding factor A (116 aa).

The protein belongs to the RbfA family. In terms of assembly, monomer. Binds 30S ribosomal subunits, but not 50S ribosomal subunits or 70S ribosomes.

It is found in the cytoplasm. One of several proteins that assist in the late maturation steps of the functional core of the 30S ribosomal subunit. Associates with free 30S ribosomal subunits (but not with 30S subunits that are part of 70S ribosomes or polysomes). Required for efficient processing of 16S rRNA. May interact with the 5'-terminal helix region of 16S rRNA. In Streptococcus pneumoniae (strain ATCC BAA-255 / R6), this protein is Ribosome-binding factor A.